The following is a 580-amino-acid chain: F-box only protein 24 (580 aa).

Residues 36–82 (PISIQLFPPELVEHIISFLPVRDLVALGQTCRYFHEVCDGEGVWRRI) enclose the F-box domain. Residues 376–425 (GRIFMQGNNRYGQLGTGDKMDRGEPTQVCYLQRPITLWCGLNHSLVLSQS) form an RCC1 repeat.

Directly interacts with SKP1 and CUL1.

Its function is as follows. Substrate-recognition component of the SCF (SKP1-CUL1-F-box protein)-type E3 ubiquitin ligase complex. In Homo sapiens (Human), this protein is F-box only protein 24 (FBXO24).